The following is a 184-amino-acid chain: Photosystem I assembly protein Ycf4 (184 aa).

Helical transmembrane passes span 22–42 (FGWA…GASS) and 57–77 (IVFF…LFIS).

It belongs to the Ycf4 family.

The protein localises to the plastid. Its subcellular location is the chloroplast thylakoid membrane. Seems to be required for the assembly of the photosystem I complex. This Acorus calamus (Sweet flag) protein is Photosystem I assembly protein Ycf4.